A 253-amino-acid polypeptide reads, in one-letter code: Prepilin leader peptidase/N-methyltransferase (253 aa).

The chain crosses the membrane as a helical span at residues 4–24 (VYLILFSIVSLILGSFSNVVI). Residues cysteine 48, cysteine 51, cysteine 73, and cysteine 76 each contribute to the Zn(2+) site. 6 helical membrane passes run 80-100 (ISLS…PIYW), 106-126 (VDSF…VIDF), 129-149 (MLLP…YVQQ), 159-179 (IIGG…VRLF), 198-218 (TLIG…IAFI), and 230-250 (CLYI…FFSI).

It belongs to the peptidase A24 family. Requires Zn(2+) as cofactor.

Its subcellular location is the cell inner membrane. The catalysed reaction is Typically cleaves a -Gly-|-Phe- bond to release an N-terminal, basic peptide of 5-8 residues from type IV prepilin, and then N-methylates the new N-terminal amino group, the methyl donor being S-adenosyl-L-methionine.. Its function is as follows. Plays an essential role in type IV pili and type II pseudopili formation by proteolytically removing the leader sequence from substrate proteins and subsequently monomethylating the alpha-amino group of the newly exposed N-terminal phenylalanine. This is Prepilin leader peptidase/N-methyltransferase (tcpJ) from Vibrio cholerae serotype O1 (strain ATCC 39315 / El Tor Inaba N16961).